The chain runs to 209 residues: MSIKYIASSKLPTPWGVFEMHGFEDSETGKEHVALTFGTLSPDAPILGRIHSECLTGDALFSLRCDCGFQLQTAMQNVAEEGQGFILYLRQEGRGIGLLNKIRAYELQDQGANTVEANERLGFEADMRKYDMIIPMMEKIGVAKVRLMTNNPRKVKAMQSFGLEVVERVPLQVGKNRYNEGYLKTKSTELGHMMSEHHFTDADTEAKKD.

Residue 49–53 (RIHSE) coordinates GTP. Zn(2+) contacts are provided by C54, C65, and C67. Residues Q70, 92 to 94 (EGR), and T114 contribute to the GTP site. Residue D126 is the Proton acceptor of the active site. R128 serves as the catalytic Nucleophile. Residues T149 and K154 each coordinate GTP.

This sequence belongs to the GTP cyclohydrolase II family. Zn(2+) is required as a cofactor.

It carries out the reaction GTP + 4 H2O = 2,5-diamino-6-hydroxy-4-(5-phosphoribosylamino)-pyrimidine + formate + 2 phosphate + 3 H(+). It functions in the pathway cofactor biosynthesis; riboflavin biosynthesis; 5-amino-6-(D-ribitylamino)uracil from GTP: step 1/4. Functionally, catalyzes the conversion of GTP to 2,5-diamino-6-ribosylamino-4(3H)-pyrimidinone 5'-phosphate (DARP), formate and pyrophosphate. The chain is GTP cyclohydrolase-2 from Shewanella halifaxensis (strain HAW-EB4).